The chain runs to 314 residues: tRNA dimethylallyltransferase (314 aa).

Residue 15–22 (GPTATGKS) coordinates ATP. 17 to 22 (TATGKS) serves as a coordination point for substrate. An interaction with substrate tRNA region spans residues 40–43 (DSML).

This sequence belongs to the IPP transferase family. As to quaternary structure, monomer. Mg(2+) is required as a cofactor.

It carries out the reaction adenosine(37) in tRNA + dimethylallyl diphosphate = N(6)-dimethylallyladenosine(37) in tRNA + diphosphate. Catalyzes the transfer of a dimethylallyl group onto the adenine at position 37 in tRNAs that read codons beginning with uridine, leading to the formation of N6-(dimethylallyl)adenosine (i(6)A). The polypeptide is tRNA dimethylallyltransferase (Pelotomaculum thermopropionicum (strain DSM 13744 / JCM 10971 / SI)).